The primary structure comprises 1438 residues: DNA polymerase III PolC-type (1438 aa).

One can recognise an Exonuclease domain in the interval 422-578 (YVVFDVETTG…YDTEATAYIF (157 aa)).

This sequence belongs to the DNA polymerase type-C family. PolC subfamily.

It localises to the cytoplasm. It catalyses the reaction DNA(n) + a 2'-deoxyribonucleoside 5'-triphosphate = DNA(n+1) + diphosphate. Required for replicative DNA synthesis. This DNA polymerase also exhibits 3' to 5' exonuclease activity. This is DNA polymerase III PolC-type from Staphylococcus epidermidis (strain ATCC 35984 / DSM 28319 / BCRC 17069 / CCUG 31568 / BM 3577 / RP62A).